Reading from the N-terminus, the 62-residue chain is MTSILQVALLALIFVSFALVVGVPVVFATPNGWTDNKGAVFSGLSLWLLLVFVVGILNSFVV.

Helical transmembrane passes span A8 to A28 and F41 to V61.

This sequence belongs to the PsbZ family. In terms of assembly, PSII is composed of 1 copy each of membrane proteins PsbA, PsbB, PsbC, PsbD, PsbE, PsbF, PsbH, PsbI, PsbJ, PsbK, PsbL, PsbM, PsbT, PsbY, PsbZ, Psb30/Ycf12, at least 3 peripheral proteins of the oxygen-evolving complex and a large number of cofactors. It forms dimeric complexes.

Its subcellular location is the plastid. The protein localises to the chloroplast thylakoid membrane. Functionally, controls the interaction of photosystem II (PSII) cores with the light-harvesting antenna, aiding in the dissipation of excitation energy within PSII. PSII is a light-driven water plastoquinone oxidoreductase, using light energy to abstract electrons from H(2)O, generating a proton gradient subsequently used for ATP formation. This Chlamydomonas reinhardtii (Chlamydomonas smithii) protein is Photosystem II reaction center protein Z.